We begin with the raw amino-acid sequence, 439 residues long: Enolase (439 aa).

Positions 160 and 169 each coordinate substrate. Glu-212 serves as the catalytic Proton donor. Asp-247, Glu-296, and Asp-323 together coordinate Mg(2+). The substrate site is built by Glu-296 and Asp-323. Residue Lys-348 is the Proton acceptor of the active site. Substrate is bound by residues 375 to 378 and Lys-399; that span reads SHRS.

Belongs to the enolase family. As to quaternary structure, homodimer. The cofactor is Mg(2+).

Its subcellular location is the cytoplasm. It carries out the reaction (2R)-2-phosphoglycerate = phosphoenolpyruvate + H2O. It participates in carbohydrate degradation; glycolysis; pyruvate from D-glyceraldehyde 3-phosphate: step 4/5. This Rhodotorula mucilaginosa (Yeast) protein is Enolase (ENO).